We begin with the raw amino-acid sequence, 477 residues long: Histidine--tRNA ligase (477 aa).

This sequence belongs to the class-II aminoacyl-tRNA synthetase family. Homodimer.

It is found in the cytoplasm. It carries out the reaction tRNA(His) + L-histidine + ATP = L-histidyl-tRNA(His) + AMP + diphosphate + H(+). This is Histidine--tRNA ligase (hisS) from Xanthomonas campestris pv. campestris (strain ATCC 33913 / DSM 3586 / NCPPB 528 / LMG 568 / P 25).